Consider the following 855-residue polypeptide: Glucans biosynthesis glucosyltransferase H (855 aa).

6 helical membrane passes run 142–162, 196–216, 515–535, 572–592, 606–626, and 682–702; these read ILLT…KGIL, ILVL…TALM, VFLT…FLVL, LFST…ILIW, TLSM…RMIF, and FLWW…VSVI.

This sequence belongs to the glycosyltransferase 2 family. OpgH subfamily.

It localises to the cell inner membrane. Its pathway is glycan metabolism; osmoregulated periplasmic glucan (OPG) biosynthesis. Functionally, involved in the biosynthesis of osmoregulated periplasmic glucans (OPGs). The polypeptide is Glucans biosynthesis glucosyltransferase H (Pseudomonas entomophila (strain L48)).